Here is a 577-residue protein sequence, read N- to C-terminus: Probable HECT-type ubiquitin ligase-interacting protein creD (577 aa).

Disordered stretches follow at residues L376 to S398 and N428 to R566. 2 stretches are compositionally biased toward polar residues: residues N428–E447 and S460–E472. Positions L473–V486 are enriched in basic and acidic residues. The span at S528–F544 shows a compositional bias: polar residues.

The protein belongs to the arrestin family. As to quaternary structure, interacts with hulA.

Component of the regulatory network controlling carbon source utilization through ubiquitination and deubiquitination involving creA, creB, creC, creD and acrB. May be involved in signaling by recognizing appropriately phosphorylated substrates via its arrestin domains and then recruit a HECT-type ubiquitin ligase such as hulA, leading to ubiquitination of the substrate, providing a link between ubiquitination and phosphorylation in protein regulation and stability. The protein is Probable HECT-type ubiquitin ligase-interacting protein creD (creD) of Aspergillus terreus (strain NIH 2624 / FGSC A1156).